A 729-amino-acid polypeptide reads, in one-letter code: Oligopeptide transporter 4 (729 aa).

Ala-2 carries the N-acetylalanine modification. The residue at position 8 (Ser-8) is a Phosphoserine. A run of 16 helical transmembrane segments spans residues 37-57 (MWFLGLISCSLLSFLNQFFSY), 61-81 (PLVITQITVQVATLPIGHFLA), 123-143 (AFGSGSAYAVGIITIIKAFYG), 148-168 (FIAGWLLIITTQVLGYGWAGL), 177-194 (AHMWWPSTLVQVSLFRAL), 207-227 (FFVIALVCSFGWYIVPGYLFT), 256-276 (GLGAFTLDWTAVASFLFSPLI), 279-299 (FFAIANVFIGYVLLIYFVLPL), 352-372 (LSMFFALTYGLGFATIASTLT), 410-430 (WWFYSMLAATLLISLALCVFL), 438-458 (WWGLVFASAMAFVFTLPISII), 522-542 (FLVQFIGTILAGTINITVAWW), 592-612 (YAAMNWFFLGGALGPVIVWSL), 621-637 (WIPLVNLPVLLGATAMM), 640-660 (ATAVNYNSWILVGTIFNLFVF), and 673-693 (VLSAAMDAGVAFMAVLLYFSV).

It belongs to the oligopeptide OPT transporter (TC 2.A.67.1) family. In terms of tissue distribution, expressed in flowers, leaves, roots, and stems.

Its subcellular location is the membrane. Its function is as follows. Involved in the translocation of tetra- and pentapeptides across the cellular membrane in an energy-dependent manner. This Arabidopsis thaliana (Mouse-ear cress) protein is Oligopeptide transporter 4 (OPT4).